The chain runs to 221 residues: Translation initiation factor 6 (221 aa).

Belongs to the eIF-6 family.

Functionally, binds to the 50S ribosomal subunit and prevents its association with the 30S ribosomal subunit to form the 70S initiation complex. The protein is Translation initiation factor 6 of Methanopyrus kandleri (strain AV19 / DSM 6324 / JCM 9639 / NBRC 100938).